The following is a 1529-amino-acid chain: DNA-directed RNA polymerase subunit beta' (1529 aa).

Positions 156, 158, 183, and 186 each coordinate Zn(2+). The Mg(2+) site is built by Asp-1328, Asp-1330, and Asp-1332.

Belongs to the RNA polymerase beta' chain family. RpoC1 subfamily. In terms of assembly, in plastids the minimal PEP RNA polymerase catalytic core is composed of four subunits: alpha, beta, beta', and beta''. When a (nuclear-encoded) sigma factor is associated with the core the holoenzyme is formed, which can initiate transcription. Mg(2+) is required as a cofactor. The cofactor is Zn(2+).

The protein resides in the plastid. The protein localises to the chloroplast. The catalysed reaction is RNA(n) + a ribonucleoside 5'-triphosphate = RNA(n+1) + diphosphate. DNA-dependent RNA polymerase catalyzes the transcription of DNA into RNA using the four ribonucleoside triphosphates as substrates. This is DNA-directed RNA polymerase subunit beta' from Tetradesmus obliquus (Green alga).